We begin with the raw amino-acid sequence, 655 residues long: p-hydroxybenzoic acid efflux pump subunit AaeB (655 aa).

Topologically, residues Met1–Arg12 are periplasmic. The chain crosses the membrane as a helical span at residues Phe13–Leu33. Topologically, residues Glu34–Arg37 are cytoplasmic. Residues Trp38–Pro58 form a helical membrane-spanning segment. Topologically, residues Tyr59–Phe68 are periplasmic. The helical transmembrane segment at Leu69–Ile89 threads the bilayer. Topologically, residues Arg90 to Pro92 are cytoplasmic. The helical transmembrane segment at Leu93–Val113 threads the bilayer. At Arg114 to Ala120 the chain is on the periplasmic side. A helical membrane pass occupies residues Trp121–Leu141. Residues Thr142–Ser151 lie on the Cytoplasmic side of the membrane. The chain crosses the membrane as a helical span at residues Glu152–Ile172. At Lys173–Thr369 the chain is on the periplasmic side. Residues Leu370–Val390 form a helical membrane-spanning segment. Topologically, residues Thr391–Asp406 are cytoplasmic. A helical transmembrane segment spans residues Phe407–Pro427. At Asn428–Gln430 the chain is on the periplasmic side. A helical membrane pass occupies residues Gln431–Val451. Residues Gln452–Ser458 lie on the Cytoplasmic side of the membrane. The chain crosses the membrane as a helical span at residues Met459–Phe479. At Ser480 to Gln481 the chain is on the periplasmic side. Residues Phe482–Leu502 form a helical membrane-spanning segment. Residues Val503–Ser655 are Cytoplasmic-facing.

Belongs to the aromatic acid exporter ArAE (TC 2.A.85) family.

Its subcellular location is the cell inner membrane. In terms of biological role, forms an efflux pump with AaeA. Could function as a metabolic relief valve, allowing to eliminate certain compounds when they accumulate to high levels in the cell. The polypeptide is p-hydroxybenzoic acid efflux pump subunit AaeB (Shigella flexneri).